Reading from the N-terminus, the 399-residue chain is Nicotinate phosphoribosyltransferase 1 (399 aa).

Residue histidine 224 is modified to Phosphohistidine; by autocatalysis.

The protein belongs to the NAPRTase family. In terms of processing, transiently phosphorylated on a His residue during the reaction cycle. Phosphorylation strongly increases the affinity for substrates and increases the rate of nicotinate D-ribonucleotide production. Dephosphorylation regenerates the low-affinity form of the enzyme, leading to product release.

The catalysed reaction is nicotinate + 5-phospho-alpha-D-ribose 1-diphosphate + ATP + H2O = nicotinate beta-D-ribonucleotide + ADP + phosphate + diphosphate. Its pathway is cofactor biosynthesis; NAD(+) biosynthesis; nicotinate D-ribonucleotide from nicotinate: step 1/1. In terms of biological role, catalyzes the synthesis of beta-nicotinate D-ribonucleotide from nicotinate and 5-phospho-D-ribose 1-phosphate at the expense of ATP. This chain is Nicotinate phosphoribosyltransferase 1, found in Pseudomonas aeruginosa (strain ATCC 15692 / DSM 22644 / CIP 104116 / JCM 14847 / LMG 12228 / 1C / PRS 101 / PAO1).